Consider the following 386-residue polypeptide: GTPase Obg (386 aa).

The region spanning 4 to 162 is the Obg domain; the sequence is SNFVDYVKIY…RTVILQLKLL (159 aa). The interval 18 to 44 is disordered; that stretch reads KGGRGSSHFRREKYIPKGGPDGGDGGR. The OBG-type G domain maps to 163–329; the sequence is ADVGLVGFPN…LKDLLWKELN (167 aa). GTP is bound by residues 169–176, 194–198, 216–219, 283–286, and 310–312; these read GFPNAGKS, FTTLE, DIPG, TKSD, and SSI. The Mg(2+) site is built by serine 176 and threonine 196. The tract at residues 357 to 386 is disordered; it reads YIFPVDEDEDDPDEEYEEYWDDDEDEDTRK.

This sequence belongs to the TRAFAC class OBG-HflX-like GTPase superfamily. OBG GTPase family. Monomer. Requires Mg(2+) as cofactor.

It is found in the cytoplasm. Functionally, an essential GTPase which binds GTP, GDP and possibly (p)ppGpp with moderate affinity, with high nucleotide exchange rates and a fairly low GTP hydrolysis rate. Plays a role in control of the cell cycle, stress response, ribosome biogenesis and in those bacteria that undergo differentiation, in morphogenesis control. The chain is GTPase Obg from Parabacteroides distasonis (strain ATCC 8503 / DSM 20701 / CIP 104284 / JCM 5825 / NCTC 11152).